Consider the following 550-residue polypeptide: Dihydroxy-acid dehydratase (550 aa).

Mg(2+) is bound at residue D78. C119 is a binding site for [2Fe-2S] cluster. D120 and K121 together coordinate Mg(2+). At K121 the chain carries N6-carboxylysine. C192 contributes to the [2Fe-2S] cluster binding site. Residue E440 coordinates Mg(2+). The active-site Proton acceptor is the S466.

Belongs to the IlvD/Edd family. Homodimer. [2Fe-2S] cluster serves as cofactor. Requires Mg(2+) as cofactor.

It carries out the reaction (2R)-2,3-dihydroxy-3-methylbutanoate = 3-methyl-2-oxobutanoate + H2O. It catalyses the reaction (2R,3R)-2,3-dihydroxy-3-methylpentanoate = (S)-3-methyl-2-oxopentanoate + H2O. Its pathway is amino-acid biosynthesis; L-isoleucine biosynthesis; L-isoleucine from 2-oxobutanoate: step 3/4. The protein operates within amino-acid biosynthesis; L-valine biosynthesis; L-valine from pyruvate: step 3/4. In terms of biological role, functions in the biosynthesis of branched-chain amino acids. Catalyzes the dehydration of (2R,3R)-2,3-dihydroxy-3-methylpentanoate (2,3-dihydroxy-3-methylvalerate) into 2-oxo-3-methylpentanoate (2-oxo-3-methylvalerate) and of (2R)-2,3-dihydroxy-3-methylbutanoate (2,3-dihydroxyisovalerate) into 2-oxo-3-methylbutanoate (2-oxoisovalerate), the penultimate precursor to L-isoleucine and L-valine, respectively. This is Dihydroxy-acid dehydratase from Thermodesulfovibrio yellowstonii (strain ATCC 51303 / DSM 11347 / YP87).